A 152-amino-acid polypeptide reads, in one-letter code: MFDILVYLFENYFDTGNYPDSATLTRKLTMAGFDDEEITLALDWLSEFSHHDTEGYLAGLAESNSMRHFTKEEMEIIDTEGRGFIFFLEQAGVINPLQRELLIDRVIRMDGDTSSVEKIKLVVLFDLWIQNQLADSNTIEKLFVVSDSHQRH.

This sequence belongs to the Smg family.

The protein is Protein Smg homolog of Nitrosomonas eutropha (strain DSM 101675 / C91 / Nm57).